Here is a 260-residue protein sequence, read N- to C-terminus: Type III pantothenate kinase (260 aa).

Asp-6–Val-13 contributes to the ATP binding site. Gly-107–Arg-110 is a binding site for substrate. Asp-109 functions as the Proton acceptor in the catalytic mechanism. Asp-129 contacts K(+). Thr-132 contacts ATP. Thr-184 is a binding site for substrate.

This sequence belongs to the type III pantothenate kinase family. Homodimer. The cofactor is NH4(+). K(+) serves as cofactor.

The protein resides in the cytoplasm. The catalysed reaction is (R)-pantothenate + ATP = (R)-4'-phosphopantothenate + ADP + H(+). It participates in cofactor biosynthesis; coenzyme A biosynthesis; CoA from (R)-pantothenate: step 1/5. Functionally, catalyzes the phosphorylation of pantothenate (Pan), the first step in CoA biosynthesis. The polypeptide is Type III pantothenate kinase (Ruegeria sp. (strain TM1040) (Silicibacter sp.)).